We begin with the raw amino-acid sequence, 323 residues long: Cysteine synthase A (323 aa).

Residues N8 and R35 each contribute to the hydrogen sulfide site. K42 is modified (N6-(pyridoxal phosphate)lysine). Pyridoxal 5'-phosphate contacts are provided by residues N72 and 177–181 (GTGGT). Residue L269 participates in hydrogen sulfide binding. Residue S273 participates in pyridoxal 5'-phosphate binding.

Belongs to the cysteine synthase/cystathionine beta-synthase family. Homodimer. It depends on pyridoxal 5'-phosphate as a cofactor.

The enzyme catalyses O-acetyl-L-serine + hydrogen sulfide = L-cysteine + acetate. Its pathway is amino-acid biosynthesis; L-cysteine biosynthesis; L-cysteine from L-serine: step 2/2. Functionally, two cysteine synthase enzymes are found. Both catalyze the same reaction. Cysteine synthase B can also use thiosulfate in place of sulfide to give cysteine thiosulfonate as a product. This Salmonella typhi protein is Cysteine synthase A (cysK).